Reading from the N-terminus, the 357-residue chain is UDP-N-acetylglucosamine--N-acetylmuramyl-(pentapeptide) pyrophosphoryl-undecaprenol N-acetylglucosamine transferase (357 aa).

UDP-N-acetyl-alpha-D-glucosamine-binding positions include 14–16 (TGG), asparagine 120, arginine 164, serine 194, and glutamine 291.

Belongs to the glycosyltransferase 28 family. MurG subfamily.

Its subcellular location is the cell inner membrane. The enzyme catalyses di-trans,octa-cis-undecaprenyl diphospho-N-acetyl-alpha-D-muramoyl-L-alanyl-D-glutamyl-meso-2,6-diaminopimeloyl-D-alanyl-D-alanine + UDP-N-acetyl-alpha-D-glucosamine = di-trans,octa-cis-undecaprenyl diphospho-[N-acetyl-alpha-D-glucosaminyl-(1-&gt;4)]-N-acetyl-alpha-D-muramoyl-L-alanyl-D-glutamyl-meso-2,6-diaminopimeloyl-D-alanyl-D-alanine + UDP + H(+). The protein operates within cell wall biogenesis; peptidoglycan biosynthesis. Cell wall formation. Catalyzes the transfer of a GlcNAc subunit on undecaprenyl-pyrophosphoryl-MurNAc-pentapeptide (lipid intermediate I) to form undecaprenyl-pyrophosphoryl-MurNAc-(pentapeptide)GlcNAc (lipid intermediate II). In Fusobacterium nucleatum subsp. nucleatum (strain ATCC 25586 / DSM 15643 / BCRC 10681 / CIP 101130 / JCM 8532 / KCTC 2640 / LMG 13131 / VPI 4355), this protein is UDP-N-acetylglucosamine--N-acetylmuramyl-(pentapeptide) pyrophosphoryl-undecaprenol N-acetylglucosamine transferase.